A 424-amino-acid chain; its full sequence is Light-independent protochlorophyllide reductase subunit N (424 aa).

Cysteine 26, cysteine 51, and cysteine 112 together coordinate [4Fe-4S] cluster.

It belongs to the BchN/ChlN family. As to quaternary structure, protochlorophyllide reductase is composed of three subunits; BchL, BchN and BchB. Forms a heterotetramer of two BchB and two BchN subunits. It depends on [4Fe-4S] cluster as a cofactor.

It carries out the reaction chlorophyllide a + oxidized 2[4Fe-4S]-[ferredoxin] + 2 ADP + 2 phosphate = protochlorophyllide a + reduced 2[4Fe-4S]-[ferredoxin] + 2 ATP + 2 H2O. It functions in the pathway porphyrin-containing compound metabolism; bacteriochlorophyll biosynthesis (light-independent). Its function is as follows. Component of the dark-operative protochlorophyllide reductase (DPOR) that uses Mg-ATP and reduced ferredoxin to reduce ring D of protochlorophyllide (Pchlide) to form chlorophyllide a (Chlide). This reaction is light-independent. The NB-protein (BchN-BchB) is the catalytic component of the complex. This Rhodobacter capsulatus (strain ATCC BAA-309 / NBRC 16581 / SB1003) protein is Light-independent protochlorophyllide reductase subunit N.